A 243-amino-acid polypeptide reads, in one-letter code: Pleckstrin homology domain-containing family B member 1 (243 aa).

Residues 21 to 128 (ALVRGGWLWR…WKTALMEANS (108 aa)) enclose the PH domain.

As to quaternary structure, binds transducins. Homodimer. Interacts (via PH domain) with MYO1C. Interacts (via PH domain) with MYO7A. In terms of tissue distribution, highly expressed in retina and brain. In retina, abundantly expressed in photoreceptors. Isoform 4 is the predominant isoform expressed in mature olfactory receptor neurons and vestibular and cochlear hair cells. Also expressed in cells with possible sensory function, including peripheral retinal ganglion cells, cochlear interdental cells, and neurons of the circumventricular organ (at protein level).

The protein resides in the membrane. It is found in the cytoplasm. This is Pleckstrin homology domain-containing family B member 1 (Plekhb1) from Mus musculus (Mouse).